A 323-amino-acid polypeptide reads, in one-letter code: Germination protease (323 aa).

Residues 1 to 6 (MSVRTD) constitute a propeptide that is removed on maturation.

It belongs to the peptidase A25 family. In terms of assembly, homotetramer. In terms of processing, autoproteolytically processed. The inactive tetrameric zymogen termed p46 autoprocesses to a smaller form termed p41, which is active only during spore germination.

The enzyme catalyses Endopeptidase action with P4 Glu or Asp, P1 preferably Glu &gt; Asp, P1' hydrophobic and P2' Ala.. Its function is as follows. Initiates the rapid degradation of small, acid-soluble proteins during spore germination. In Clostridium tetani (strain Massachusetts / E88), this protein is Germination protease.